A 1216-amino-acid chain; its full sequence is DNA-directed RNA polymerase subunit beta' (1216 aa).

Residues Cys60, Cys62, Cys75, and Cys78 each coordinate Zn(2+). Positions 450, 452, and 454 each coordinate Mg(2+). Residues Cys819, Cys893, Cys900, and Cys903 each contribute to the Zn(2+) site.

This sequence belongs to the RNA polymerase beta' chain family. In terms of assembly, the RNAP catalytic core consists of 2 alpha, 1 beta, 1 beta' and 1 omega subunit. When a sigma factor is associated with the core the holoenzyme is formed, which can initiate transcription. The cofactor is Mg(2+). It depends on Zn(2+) as a cofactor.

The enzyme catalyses RNA(n) + a ribonucleoside 5'-triphosphate = RNA(n+1) + diphosphate. Functionally, DNA-dependent RNA polymerase catalyzes the transcription of DNA into RNA using the four ribonucleoside triphosphates as substrates. This chain is DNA-directed RNA polymerase subunit beta', found in Streptococcus agalactiae serotype Ia (strain ATCC 27591 / A909 / CDC SS700).